A 54-amino-acid polypeptide reads, in one-letter code: UPF0391 membrane protein BMEI0373 (54 aa).

2 helical membrane-spanning segments follow: residues 5–25 (VLVF…GIAG) and 29–48 (GIAQ…SLIA).

This sequence belongs to the UPF0391 family.

It is found in the cell membrane. In Brucella melitensis biotype 1 (strain ATCC 23456 / CCUG 17765 / NCTC 10094 / 16M), this protein is UPF0391 membrane protein BMEI0373.